The primary structure comprises 330 residues: GTPase Obg (330 aa).

An Obg domain is found at 1-159; it reads MQFIDQARIT…WPLQLELKLL (159 aa). The OBG-type G domain maps to 160 to 328; sequence AEVGIIGLPN…LLERVWKELG (169 aa). ATP-binding positions include 166–173, 191–195, 213–216, 280–283, and 309–311; these read GLPNAGKS, FTTLV, DIPG, NKQE, and SAA. Residues serine 173 and threonine 193 each coordinate Mg(2+).

It belongs to the TRAFAC class OBG-HflX-like GTPase superfamily. OBG GTPase family. In terms of assembly, monomer. Requires Mg(2+) as cofactor.

The protein localises to the cytoplasm. An essential GTPase which binds GTP, GDP and possibly (p)ppGpp with moderate affinity, with high nucleotide exchange rates and a fairly low GTP hydrolysis rate. Plays a role in control of the cell cycle, stress response, ribosome biogenesis and in those bacteria that undergo differentiation, in morphogenesis control. In Parasynechococcus marenigrum (strain WH8102), this protein is GTPase Obg.